The following is a 252-amino-acid chain: Ribosomal RNA small subunit methyltransferase NEP1 (252 aa).

S-adenosyl-L-methionine contacts are provided by residues leucine 180, glycine 207, 212 to 214 (GKD), and 227 to 232 (LSNYPL).

Belongs to the class IV-like SAM-binding methyltransferase superfamily. RNA methyltransferase NEP1 family. As to quaternary structure, homodimer. Interacts with snoRNA U3. Interacts with NOP14 and MPP10. Component of the ribosomal small subunit (SSU) processome composed of at least 40 protein subunits and snoRNA U3.

Its subcellular location is the nucleus. It is found in the nucleolus. The enzyme catalyses pseudouridine(1191) in yeast 18S rRNA + S-adenosyl-L-methionine = N(1)-methylpseudouridine(1191) in yeast 18S rRNA + S-adenosyl-L-homocysteine + H(+). In terms of biological role, S-adenosyl-L-methionine-dependent pseudouridine N(1)-methyltransferase that methylates pseudouridine at position 1189 (Psi1189) in 18S rRNA. Involved the biosynthesis of the hypermodified N1-methyl-N3-(3-amino-3-carboxypropyl) pseudouridine (m1acp3-Psi) conserved in eukaryotic 18S rRNA. N1-methylation is independent on acp-modification at the N3-position of U1191. Also has an essential role in 40S ribosomal subunit biogenesis independent on its methyltransferase activity, facilitating the incorporation of ribosomal protein S19 (RPS19A/RPS19B) during the formation of pre-ribosomes. The protein is Ribosomal RNA small subunit methyltransferase NEP1 of Saccharomyces cerevisiae (strain ATCC 204508 / S288c) (Baker's yeast).